Consider the following 533-residue polypeptide: Probable RNA-binding protein 46 (533 aa).

RRM domains lie at 61–139 (CEVF…VSLD), 141–223 (CRLF…WADP), and 236–308 (KVLY…LAKP). The segment at 338–362 (ESHSKSLGKPPTLPTRLNGQHSPSP) is disordered.

As to quaternary structure, interacts with YTHDC2, MEIOC, MOV10, CNOT6L, DDX4, UPF1 and PABPC1. In terms of tissue distribution, expressed in the testis and ovary (at protein level). Expressed in spermatogonia and spermatocytes in testis (at protein level).

It localises to the cytoplasm. In terms of biological role, essential for male and female fertility, playing a crucial role in regulating germ cell development by ensuring the proper progression of meiosis prophase I. Regulates mitotic-to-meiotic transition in spermatogenesis by forming a complex with MEIOC and YTHDC2 which recognizes and down-regulates mitotic transcripts for a successful meiotic entry. Required for normal synaptonemal complex formation during meiosis, binding meiotic cohesin subunit mRNAs containing GCCUAU/GUUCGA motifs in their 3'UTRs regions and positively regulating their translation. Required for spermatogonial differentiation in both developing and adult testis. This chain is Probable RNA-binding protein 46, found in Mus musculus (Mouse).